Consider the following 268-residue polypeptide: UPF0328 protein ECU10_1850 (268 aa).

This sequence belongs to the UPF0328 family.

The protein is UPF0328 protein ECU10_1850 of Encephalitozoon cuniculi (strain GB-M1) (Microsporidian parasite).